Consider the following 406-residue polypeptide: Inactive serine protease 35 (406 aa).

The signal sequence occupies residues 1–17 (MLLWLIIFVSGWTLSLG). A glycan (N-linked (GlcNAc...) asparagine) is linked at asparagine 87. In terms of domain architecture, Peptidase S1 spans 121 to 401 (VYGTDSRFSI…ICLWIHGNAA (281 aa)). Cysteine 151 and cysteine 167 form a disulfide bridge. Positions 186 to 204 (LKMRNKGGRKKRRGSRRSR) are enriched in basic residues. A disordered region spans residues 186–248 (LKMRNKGGRK…RPSFQWTRVK (63 aa)).

This sequence belongs to the peptidase S1 family.

The protein localises to the secreted. The sequence is that of Inactive serine protease 35 (Prss35) from Rattus norvegicus (Rat).